The sequence spans 366 residues: Chorismate synthase (366 aa).

Arg48 provides a ligand contact to NADP(+). FMN contacts are provided by residues 125–127 (RSS), 238–239 (NA), Gly278, 293–297 (KPTSS), and Arg319.

Belongs to the chorismate synthase family. As to quaternary structure, homotetramer. The cofactor is FMNH2.

It carries out the reaction 5-O-(1-carboxyvinyl)-3-phosphoshikimate = chorismate + phosphate. It functions in the pathway metabolic intermediate biosynthesis; chorismate biosynthesis; chorismate from D-erythrose 4-phosphate and phosphoenolpyruvate: step 7/7. In terms of biological role, catalyzes the anti-1,4-elimination of the C-3 phosphate and the C-6 proR hydrogen from 5-enolpyruvylshikimate-3-phosphate (EPSP) to yield chorismate, which is the branch point compound that serves as the starting substrate for the three terminal pathways of aromatic amino acid biosynthesis. This reaction introduces a second double bond into the aromatic ring system. This Hydrogenovibrio crunogenus (strain DSM 25203 / XCL-2) (Thiomicrospira crunogena) protein is Chorismate synthase.